A 137-amino-acid chain; its full sequence is MLQPKRTKFRKMHKGRNTGLAHRGSTVAFGQFGLKSVGRGRMTARQIEAARRTITRKVKRGGKIWIRVFPDKPITNKPLEVRMGKGKGPVEYWVCEIKPGKMLYEIEGVSEELAREAFTLAAAKLPFKTTIVKRTIM.

Belongs to the universal ribosomal protein uL16 family. As to quaternary structure, part of the 50S ribosomal subunit.

Functionally, binds 23S rRNA and is also seen to make contacts with the A and possibly P site tRNAs. The sequence is that of Large ribosomal subunit protein uL16 from Psychrobacter sp. (strain PRwf-1).